A 289-amino-acid chain; its full sequence is 3-methyl-2-oxobutanoate hydroxymethyltransferase (289 aa).

Mg(2+)-binding residues include aspartate 58 and aspartate 99. 3-methyl-2-oxobutanoate contacts are provided by residues 58–59 (DS), aspartate 99, and lysine 128. Glutamate 130 contacts Mg(2+). The active-site Proton acceptor is the glutamate 197.

This sequence belongs to the PanB family. Homodecamer; pentamer of dimers. The cofactor is Mg(2+).

The protein resides in the cytoplasm. It carries out the reaction 3-methyl-2-oxobutanoate + (6R)-5,10-methylene-5,6,7,8-tetrahydrofolate + H2O = 2-dehydropantoate + (6S)-5,6,7,8-tetrahydrofolate. It participates in cofactor biosynthesis; (R)-pantothenate biosynthesis; (R)-pantoate from 3-methyl-2-oxobutanoate: step 1/2. Its function is as follows. Catalyzes the reversible reaction in which hydroxymethyl group from 5,10-methylenetetrahydrofolate is transferred onto alpha-ketoisovalerate to form ketopantoate. The protein is 3-methyl-2-oxobutanoate hydroxymethyltransferase of Leptothrix cholodnii (strain ATCC 51168 / LMG 8142 / SP-6) (Leptothrix discophora (strain SP-6)).